A 1342-amino-acid chain; its full sequence is DNA-directed RNA polymerase subunit beta (1342 aa).

It belongs to the RNA polymerase beta chain family. As to quaternary structure, the RNAP catalytic core consists of 2 alpha, 1 beta, 1 beta' and 1 omega subunit. When a sigma factor is associated with the core the holoenzyme is formed, which can initiate transcription.

It catalyses the reaction RNA(n) + a ribonucleoside 5'-triphosphate = RNA(n+1) + diphosphate. DNA-dependent RNA polymerase catalyzes the transcription of DNA into RNA using the four ribonucleoside triphosphates as substrates. This chain is DNA-directed RNA polymerase subunit beta, found in Edwardsiella ictaluri (strain 93-146).